Reading from the N-terminus, the 160-residue chain is Sodium/proline symporter (160 aa).

Transmembrane regions (helical) follow at residues proline 6–tryptophan 26 and isoleucine 68–isoleucine 88.

Belongs to the sodium:solute symporter (SSF) (TC 2.A.21) family.

It localises to the cell inner membrane. The enzyme catalyses L-proline(in) + Na(+)(in) = L-proline(out) + Na(+)(out). Functionally, catalyzes the sodium-dependent uptake of extracellular L-proline. This is Sodium/proline symporter from Klebsiella oxytoca.